Consider the following 252-residue polypeptide: tRNA (guanine-N(1)-)-methyltransferase (252 aa).

Residues Gly113 and 133–138 (IGDYVL) contribute to the S-adenosyl-L-methionine site.

Belongs to the RNA methyltransferase TrmD family. Homodimer.

The protein localises to the cytoplasm. It catalyses the reaction guanosine(37) in tRNA + S-adenosyl-L-methionine = N(1)-methylguanosine(37) in tRNA + S-adenosyl-L-homocysteine + H(+). Its function is as follows. Specifically methylates guanosine-37 in various tRNAs. In Xanthomonas campestris pv. campestris (strain 8004), this protein is tRNA (guanine-N(1)-)-methyltransferase.